A 246-amino-acid polypeptide reads, in one-letter code: MLDQVCQLARNAGDAIMQVYDGTKPMDVVSKADNSPVTAADIAAHTVIMDGLRTLAPDIPVLSEEDPPGWEVRQHWQRYWLVDPLDGTKEFIKRNGEFTVNIALIDHGKPILGVVYAPVMNVMYSAAEGKAWKEECGVRKLIQVRDARPPLVVISRSHADAELKEYLQQLGEHQTTSIGSSLKFCLVAEGQAQLYPRFGPTNIWDTAAGHAVAAAAGAHVHDWQGKPLDYTPRESFLNPGFRVSIY.

The Mg(2+) site is built by Glu-64, Asp-83, Leu-85, Asp-86, and Asp-205. A substrate-binding site is contributed by Glu-64. Substrate-binding positions include 85 to 88 and Asp-205; that span reads LDGT.

It belongs to the inositol monophosphatase superfamily. CysQ family. It depends on Mg(2+) as a cofactor.

It localises to the cell inner membrane. The catalysed reaction is adenosine 3',5'-bisphosphate + H2O = AMP + phosphate. In terms of biological role, converts adenosine-3',5'-bisphosphate (PAP) to AMP. The sequence is that of 3'(2'),5'-bisphosphate nucleotidase CysQ from Shigella flexneri.